Reading from the N-terminus, the 435-residue chain is Temperature-sensitive sn-2 acyl-lipid omega-3 desaturase (ferredoxin), chloroplastic (435 aa).

The N-terminal 42 residues, 1 to 42, are a transit peptide targeting the chloroplast; sequence MASSVLSECGFRPLPRFYPKHTTSFASNPKPTFKFNPPLKPP. The next 2 helical transmembrane spans lie at 111–131 and 134–154; these read MSYV…AAYF and WLLW…LFVL. The Histidine box-1 motif lies at 156–160; that stretch reads HDCGH. Residues 192 to 196 carry the Histidine box-2 motif; that stretch reads HRTHH. Transmembrane regions (helical) follow at residues 268–290 and 297–319; these read VLTS…FVMG and LYGI…HHHG. Positions 359-363 match the Histidine box-3 motif; sequence HVIHH.

It belongs to the fatty acid desaturase type 1 family.

Its subcellular location is the plastid. It is found in the chloroplast membrane. The catalysed reaction is a (7Z,10Z)-hexadecadienoyl-containing glycerolipid + 2 reduced [2Fe-2S]-[ferredoxin] + O2 + 2 H(+) = a (7Z,10Z,13Z)-hexadecatrienoyl-containing glycerolipid + 2 oxidized [2Fe-2S]-[ferredoxin] + 2 H2O. It catalyses the reaction a (9Z,12Z)-octadecadienoyl-containing glycerolipid + 2 reduced [2Fe-2S]-[ferredoxin] + O2 + 2 H(+) = (9Z,12Z,15Z)-octadecatrienoyl-containing glycerolipid + 2 oxidized [2Fe-2S]-[ferredoxin] + 2 H2O. It participates in lipid metabolism; polyunsaturated fatty acid biosynthesis. Functionally, chloroplast omega-3 fatty acid desaturase introduces the third double bond in the biosynthesis of 16:3 and 18:3 fatty acids, important constituents of plant membranes. It is thought to use ferredoxin as an electron donor and to act on fatty acids esterified to galactolipids, sulfolipids and phosphatidylglycerol. The polypeptide is Temperature-sensitive sn-2 acyl-lipid omega-3 desaturase (ferredoxin), chloroplastic (Arabidopsis thaliana (Mouse-ear cress)).